The chain runs to 222 residues: Coiled-coil domain-containing protein 70 (222 aa).

The stretch at 129 to 153 forms a coiled coil; sequence NALWERDRNLLQEDKALWEEEKALW.

This chain is Coiled-coil domain-containing protein 70, found in Homo sapiens (Human).